The sequence spans 132 residues: MRHYVLSISFAVALFLECYTPSTAISIGKMDDVALEQDTLDSLLSVEVSENSPDSVRGRSSKIVLLADSGLWMNLNRGLPFYKLRAAAAGPDRALTLDRREAGQDLSPSISIVRRDTMRCMVGRVYRPCWEV.

The signal sequence occupies residues 1–24 (MRHYVLSISFAVALFLECYTPSTA). A disulfide bridge links Cys120 with Cys129.

The protein belongs to the melanin-concentrating hormone family. Pituitary gland. Produced in neurons of lateral basal hypothalamus which project both to the brain and to the neural lobe of the pituitary gland from where MCH is released.

Plays a role in skin pigmentation by antagonizing the action of melanotropin alpha. Induces melanin concentration within the melanophores. May participate in the control of the hypothalamo-pituitary adrenal gland axis by inhibiting the release of ACTH. In Oncorhynchus keta (Chum salmon), this protein is Pro-MCH 1 (mch1).